The sequence spans 599 residues: Tryptophan 2-C-methyltransferase (599 aa).

In terms of domain architecture, B12-binding spans 4–149 (KGTVALINPN…RALAEGRSAD (146 aa)). A disordered region spans residues 167 to 197 (RVAPPALDPRAAPAPSSSPSPSPAPSSSSAP). Positions 168–181 (VAPPALDPRAAPAP) are enriched in low complexity. A Radical SAM core domain is found at 239 to 492 (YREGGLGSIL…IEYERQFMFD (254 aa)). The [4Fe-4S] cluster site is built by Cys253, Cys257, and Cys260.

It depends on [4Fe-4S] cluster as a cofactor. The cofactor is cob(II)alamin.

It carries out the reaction L-tryptophan + S-adenosyl-L-methionine = 2-methyl-L-tryptophan + S-adenosyl-L-homocysteine + H(+). In terms of biological role, involved in the biosynthetic pathway of the antibiotic thiostrepton A. First, TsrM catalyzes the transfer of a methyl group from S-adenosyl methionine (SAM) to cobalamin, leading to the formation of methylcobalamin (CH3-cobalamin) and S-adenosyl-L-homocysteine (SAH). Then the methyl group is transferred to the C2 position of tryptophan (Trp) with the concerted action of the radical SAM [4Fe-4S] center, leading to the production of methyltryptophan. The protein is Tryptophan 2-C-methyltransferase of Streptomyces laurentii.